The primary structure comprises 360 residues: Holliday junction branch migration complex subunit RuvB (360 aa).

Positions 1–23 (MIASVGDSRYYPKSVANGEKSDQ) are disordered. Residues 12-204 (PKSVANGEKS…FGIVLRLEFY (193 aa)) are large ATPase domain (RuvB-L). Residues Leu-43, Arg-44, Gly-85, Lys-88, Thr-89, Thr-90, 151–153 (EDY), Arg-194, Tyr-204, and Arg-241 each bind ATP. Mg(2+) is bound at residue Thr-89. Positions 205–275 (TTEDLKIILK…TAQKALEMLE (71 aa)) are small ATPAse domain (RuvB-S). Positions 278–360 (QHGFDEVDRR…KPPKKQDSLF (83 aa)) are head domain (RuvB-H). Arg-333 and Arg-338 together coordinate DNA.

Belongs to the RuvB family. Homohexamer. Forms an RuvA(8)-RuvB(12)-Holliday junction (HJ) complex. HJ DNA is sandwiched between 2 RuvA tetramers; dsDNA enters through RuvA and exits via RuvB. An RuvB hexamer assembles on each DNA strand where it exits the tetramer. Each RuvB hexamer is contacted by two RuvA subunits (via domain III) on 2 adjacent RuvB subunits; this complex drives branch migration. In the full resolvosome a probable DNA-RuvA(4)-RuvB(12)-RuvC(2) complex forms which resolves the HJ.

It localises to the cytoplasm. The catalysed reaction is ATP + H2O = ADP + phosphate + H(+). In terms of biological role, the RuvA-RuvB-RuvC complex processes Holliday junction (HJ) DNA during genetic recombination and DNA repair, while the RuvA-RuvB complex plays an important role in the rescue of blocked DNA replication forks via replication fork reversal (RFR). RuvA specifically binds to HJ cruciform DNA, conferring on it an open structure. The RuvB hexamer acts as an ATP-dependent pump, pulling dsDNA into and through the RuvAB complex. RuvB forms 2 homohexamers on either side of HJ DNA bound by 1 or 2 RuvA tetramers; 4 subunits per hexamer contact DNA at a time. Coordinated motions by a converter formed by DNA-disengaged RuvB subunits stimulates ATP hydrolysis and nucleotide exchange. Immobilization of the converter enables RuvB to convert the ATP-contained energy into a lever motion, pulling 2 nucleotides of DNA out of the RuvA tetramer per ATP hydrolyzed, thus driving DNA branch migration. The RuvB motors rotate together with the DNA substrate, which together with the progressing nucleotide cycle form the mechanistic basis for DNA recombination by continuous HJ branch migration. Branch migration allows RuvC to scan DNA until it finds its consensus sequence, where it cleaves and resolves cruciform DNA. This chain is Holliday junction branch migration complex subunit RuvB, found in Koribacter versatilis (strain Ellin345).